A 557-amino-acid chain; its full sequence is Nicotinate phosphoribosyltransferase 2 (557 aa).

Nicotinate contacts are provided by Y31 and T219. H222 is modified (phosphohistidine). A nicotinate-binding site is contributed by R329. T391 provides a ligand contact to 5-phospho-alpha-D-ribose 1-diphosphate.

It belongs to the NAPRTase family. It depends on Mg(2+) as a cofactor. Mn(2+) serves as cofactor. Transiently phosphorylated on a His residue during the reaction cycle. Phosphorylation strongly increases the affinity for substrates and increases the rate of nicotinate D-ribonucleotide production. Dephosphorylation regenerates the low-affinity form of the enzyme, leading to product release.

The enzyme catalyses nicotinate + 5-phospho-alpha-D-ribose 1-diphosphate + ATP + H2O = nicotinate beta-D-ribonucleotide + ADP + phosphate + diphosphate. The protein operates within cofactor biosynthesis; NAD(+) biosynthesis; nicotinate D-ribonucleotide from nicotinate: step 1/1. Functionally, catalyzes the first step in the biosynthesis of NAD from nicotinic acid, the ATP-dependent synthesis of beta-nicotinate D-ribonucleotide from nicotinate and 5-phospho-D-ribose 1-phosphate. Helps prevent cellular oxidative stress via its role in NAD biosynthesis. The sequence is that of Nicotinate phosphoribosyltransferase 2 from Arabidopsis thaliana (Mouse-ear cress).